The sequence spans 58 residues: uncharacterized protein (58 aa).

It localises to the mitochondrion. This is an uncharacterized protein from Saccharomyces cerevisiae (strain ATCC 204508 / S288c) (Baker's yeast).